The following is a 137-amino-acid chain: Putative pre-16S rRNA nuclease (137 aa).

It belongs to the YqgF nuclease family.

It is found in the cytoplasm. Functionally, could be a nuclease involved in processing of the 5'-end of pre-16S rRNA. This Clostridium botulinum (strain Eklund 17B / Type B) protein is Putative pre-16S rRNA nuclease.